A 692-amino-acid polypeptide reads, in one-letter code: Elongation factor G (692 aa).

The 275-residue stretch at 8 to 282 (ENTRNIGIMA…AVIDYLPSPL (275 aa)) folds into the tr-type G domain. GTP contacts are provided by residues 17 to 24 (AHIDAGKT), 81 to 85 (DTPGH), and 135 to 138 (NKMD).

Belongs to the TRAFAC class translation factor GTPase superfamily. Classic translation factor GTPase family. EF-G/EF-2 subfamily.

The protein localises to the cytoplasm. Functionally, catalyzes the GTP-dependent ribosomal translocation step during translation elongation. During this step, the ribosome changes from the pre-translocational (PRE) to the post-translocational (POST) state as the newly formed A-site-bound peptidyl-tRNA and P-site-bound deacylated tRNA move to the P and E sites, respectively. Catalyzes the coordinated movement of the two tRNA molecules, the mRNA and conformational changes in the ribosome. The polypeptide is Elongation factor G (Bacillus mycoides (strain KBAB4) (Bacillus weihenstephanensis)).